The chain runs to 155 residues: Large ribosomal subunit protein uL13 (155 aa).

Belongs to the universal ribosomal protein uL13 family. In terms of assembly, part of the 50S ribosomal subunit.

This protein is one of the early assembly proteins of the 50S ribosomal subunit, although it is not seen to bind rRNA by itself. It is important during the early stages of 50S assembly. This chain is Large ribosomal subunit protein uL13, found in Rickettsia akari (strain Hartford).